Here is a 1129-residue protein sequence, read N- to C-terminus: Phospholipid-transporting ATPase 11C (1129 aa).

Residues 1–83 (MFRRTLNRLC…IIFLVQVTVD (83 aa)) lie on the Cytoplasmic side of the membrane. A helical membrane pass occupies residues 84–104 (TPTSPVTSGLPLFFVITVTAI). The Extracellular portion of the chain corresponds to 105–287 (KQGYEDWLRH…SQKCSAVEKS (183 aa)). The chain crosses the membrane as a helical span at residues 288–308 (INAFLIVYLFILLTKAAVCTT). Over 309 to 343 (LKYVWQSSPYNDEPWYNQKTQKERETFQVLKMFTD) the chain is Cytoplasmic. A helical membrane pass occupies residues 344-364 (FLSFMVLFNFIIPVSMYVTVE). Over 365 to 876 (MQKFLGSFFI…YVRIAHLVQY (512 aa)) the chain is Extracellular. The 4-aspartylphosphate intermediate role is filled by Asp409. ATP is bound by residues Asp409, Lys410, and Thr411. Position 409 (Asp409) interacts with Mg(2+). Thr411 contacts Mg(2+). Ser442 bears the Phosphoserine mark. ATP-binding residues include Glu498, Phe540, Lys563, and Arg594. Residues 607-643 (DFERINAQLVEAKMALQDREEKLEKVFDEIETNMNLI) adopt a coiled-coil conformation. 3 residues coordinate ATP: Thr674, Gly675, and Asp676. Positions 695-726 (TELLELTTKTIEESERKEDRLHELLIEYRKKL) form a coiled coil. Residues Arg789 and Lys795 each contribute to the ATP site. A Mg(2+)-binding site is contributed by Asp816. 2 residues coordinate ATP: Asn819 and Asp820. Residue Asp820 participates in Mg(2+) binding. Residues 877–897 (FFYKNLCFILPQFLYQFFCGF) traverse the membrane as a helical segment. Over 898–905 (SQQPLYDA) the chain is Cytoplasmic. A helical membrane pass occupies residues 906 to 926 (AYLTMYNICFTSLPILAYSLL). The Extracellular portion of the chain corresponds to 927 to 952 (EQHINIDTLTADPRLYMKITGNAMLQ). Residues 953-973 (LGPFLHWTFLAAFEGTVFFFG) traverse the membrane as a helical segment. Topologically, residues 974–988 (TYFLFQTSSLEDNGK) are cytoplasmic. Residues 989–1009 (IYGNWTFGTIVFTVLVFTVTL) form a helical membrane-spanning segment. The Extracellular portion of the chain corresponds to 1010–1023 (KLALDTRFWTWINH). Residues 1024 to 1044 (FVIWGSLAFYVFFSFFWGGII) traverse the membrane as a helical segment. Residues 1045 to 1066 (WPFLKQQRMYFVFAQMLCSVST) lie on the Cytoplasmic side of the membrane. The chain crosses the membrane as a helical span at residues 1067-1087 (WLAIILLIFISLFPEILLIVV). Residues 1088–1129 (KNVRRRSARRNLSCRRASDSLSARPSVRPLLLRTFSDESNIL) lie on the Extracellular side of the membrane. Phosphoserine occurs at positions 1105, 1113, and 1123. The Di-leucine motif motif lies at 1113–1118 (SVRPLL).

This sequence belongs to the cation transport ATPase (P-type) (TC 3.A.3) family. Type IV subfamily. In terms of assembly, component of a P4-ATPase flippase complex which consists of a catalytic alpha subunit ATP11C and an accessory beta subunit TMEM30A. It depends on Mg(2+) as a cofactor. Post-translationally, proteolytically cleaved by CASP3, CASP6 and CASP7. Phosphorylated at Ser-1113 likely by PRKCA; this creates a functional di-leucine motif that is sufficient for endocytosis. In terms of tissue distribution, widely expressed. Expressed in retina, brain, liver and testes (at protein level). Expressed in lung, bone marrow, lymph nodes, prostate, ovary and uterus. Expressed in fetus.

The protein resides in the cell membrane. It is found in the endoplasmic reticulum membrane. It localises to the early endosome membrane. The protein localises to the recycling endosome membrane. The enzyme catalyses ATP + H2O + phospholipidSide 1 = ADP + phosphate + phospholipidSide 2.. The catalysed reaction is a 1,2-diacyl-sn-glycero-3-phospho-L-serine(out) + ATP + H2O = a 1,2-diacyl-sn-glycero-3-phospho-L-serine(in) + ADP + phosphate + H(+). It carries out the reaction a 1,2-diacyl-sn-glycero-3-phosphoethanolamine(out) + ATP + H2O = a 1,2-diacyl-sn-glycero-3-phosphoethanolamine(in) + ADP + phosphate + H(+). Functionally, catalytic component of a P4-ATPase flippase complex which catalyzes the hydrolysis of ATP coupled to the transport of aminophospholipids, phosphatidylserines (PS) and phosphatidylethanolamines (PE), from the outer to the inner leaflet of the plasma membrane. Major PS-flippase in immune cell subsets. In erythrocyte plasma membrane, it is required to maintain PS in the inner leaflet preventing its exposure on the surface. This asymmetric distribution is critical for the survival of erythrocytes in circulation since externalized PS is a phagocytic signal for erythrocyte clearance by splenic macrophages. Required for B cell differentiation past the pro-B cell stage. Seems to mediate PS flipping in pro-B cells. May be involved in the transport of cholestatic bile acids. The sequence is that of Phospholipid-transporting ATPase 11C from Mus musculus (Mouse).